The sequence spans 170 residues: MIIYKCIISGDEMFSDAFKVKESANGIFYEVDGKITTRTDNIDDSLISANASAEETTDCTDSSVVSGVDIVLNHKLQETSFDKKSYKVYIKDYVKAIKQKLQEEKPERVDAFMADVAEEVKEILNNLKNYQFFTGENMNPEGMVGLLDYREDGTTPYMLFFKDGLLAEKC.

The 170-residue stretch at Met1–Cys170 folds into the TCTP domain.

Belongs to the TCTP family.

The protein resides in the cytoplasm. Its function is as follows. Involved in calcium binding and microtubule stabilization. In Lateolabrax japonicus (Japanese sea perch), this protein is Translationally-controlled tumor protein homolog (tpt1).